The following is a 523-amino-acid chain: Tyrosine ammonia-lyase (523 aa).

Tyrosine 60 (proton donor/acceptor) is an active-site residue. Histidine 89 contributes to the substrate binding site. The segment at residues 149-151 (ASG) is a cross-link (5-imidazolinone (Ala-Gly)). Serine 150 carries the post-translational modification 2,3-didehydroalanine (Ser). Substrate contacts are provided by residues arginine 303 and 432 to 436 (NAANQ).

This sequence belongs to the PAL/histidase family. As to quaternary structure, homotetramer. Contains an active site 4-methylidene-imidazol-5-one (MIO), which is formed autocatalytically by cyclization and dehydration of residues Ala-Ser-Gly.

The catalysed reaction is L-tyrosine = (E)-4-coumarate + NH4(+). Its function is as follows. Catalyzes the non-oxidative deamination of L-tyrosine. Has very low phenylalanine ammonia-lyase activity (in vitro). The polypeptide is Tyrosine ammonia-lyase (hutH) (Cereibacter sphaeroides (strain ATCC 17023 / DSM 158 / JCM 6121 / CCUG 31486 / LMG 2827 / NBRC 12203 / NCIMB 8253 / ATH 2.4.1.) (Rhodobacter sphaeroides)).